Reading from the N-terminus, the 277-residue chain is Indole-3-glycerol phosphate synthase (277 aa).

Belongs to the TrpC family.

It carries out the reaction 1-(2-carboxyphenylamino)-1-deoxy-D-ribulose 5-phosphate + H(+) = (1S,2R)-1-C-(indol-3-yl)glycerol 3-phosphate + CO2 + H2O. It participates in amino-acid biosynthesis; L-tryptophan biosynthesis; L-tryptophan from chorismate: step 4/5. The sequence is that of Indole-3-glycerol phosphate synthase from Pseudomonas putida (strain W619).